A 370-amino-acid polypeptide reads, in one-letter code: Cytochrome b (370 aa).

4 consecutive transmembrane segments (helical) span residues 25 to 45, 69 to 90, 105 to 125, and 170 to 190; these read FGSM…FLAV, WMMQ…YIHI, WLSG…GYVL, and FFAL…LHVM. 2 residues coordinate heme b: histidine 75 and histidine 89. The heme b site is built by histidine 174 and histidine 188. Histidine 193 is a binding site for a ubiquinone. 4 consecutive transmembrane segments (helical) span residues 218–238, 280–300, 312–332, and 339–358; these read YKDL…ISFY, LGGA…PFTH, FMQL…WTAT, and FTMI…ISNP.

This sequence belongs to the cytochrome b family. As to quaternary structure, the cytochrome bc1 complex contains 3 respiratory subunits (MT-CYB, CYC1 and UQCRFS1), 2 core proteins (UQCRC1 and UQCRC2) and probably 6 low-molecular weight proteins. Requires heme b as cofactor.

It localises to the mitochondrion inner membrane. Its function is as follows. Component of the ubiquinol-cytochrome c reductase complex (complex III or cytochrome b-c1 complex) that is part of the mitochondrial respiratory chain. The b-c1 complex mediates electron transfer from ubiquinol to cytochrome c. Contributes to the generation of a proton gradient across the mitochondrial membrane that is then used for ATP synthesis. The polypeptide is Cytochrome b (MT-CYB) (Corallus hortulanus enydris (Garden tree boa)).